The primary structure comprises 212 residues: Putative 3-methyladenine DNA glycosylase (212 aa).

It belongs to the DNA glycosylase MPG family.

In Psychrobacter cryohalolentis (strain ATCC BAA-1226 / DSM 17306 / VKM B-2378 / K5), this protein is Putative 3-methyladenine DNA glycosylase.